We begin with the raw amino-acid sequence, 408 residues long: tRNA-specific 2-thiouridylase MnmA (408 aa).

Residues 27 to 34 (AMSGGVDS) and Leu-53 each bind ATP. Catalysis depends on Cys-121, which acts as the Nucleophile. Cys-121 and Cys-222 form a disulfide bridge. Gly-145 is an ATP binding site. The interval 172–174 (RDQ) is interaction with tRNA. Residue Cys-222 is the Cysteine persulfide intermediate of the active site.

This sequence belongs to the MnmA/TRMU family.

Its subcellular location is the cytoplasm. The enzyme catalyses S-sulfanyl-L-cysteinyl-[protein] + uridine(34) in tRNA + AH2 + ATP = 2-thiouridine(34) in tRNA + L-cysteinyl-[protein] + A + AMP + diphosphate + H(+). Its function is as follows. Catalyzes the 2-thiolation of uridine at the wobble position (U34) of tRNA, leading to the formation of s(2)U34. The protein is tRNA-specific 2-thiouridylase MnmA of Rhizobium etli (strain CIAT 652).